Here is a 98-residue protein sequence, read N- to C-terminus: NADH-ubiquinone oxidoreductase chain 4L (98 aa).

The next 3 membrane-spanning stretches (helical) occupy residues 2 to 22, 29 to 49, and 61 to 81; these read PSIS…MLMF, SLLC…LTIL, and ILLL…LVMV.

The protein belongs to the complex I subunit 4L family. As to quaternary structure, core subunit of respiratory chain NADH dehydrogenase (Complex I) which is composed of 45 different subunits.

The protein resides in the mitochondrion inner membrane. The catalysed reaction is a ubiquinone + NADH + 5 H(+)(in) = a ubiquinol + NAD(+) + 4 H(+)(out). Core subunit of the mitochondrial membrane respiratory chain NADH dehydrogenase (Complex I) which catalyzes electron transfer from NADH through the respiratory chain, using ubiquinone as an electron acceptor. Part of the enzyme membrane arm which is embedded in the lipid bilayer and involved in proton translocation. The protein is NADH-ubiquinone oxidoreductase chain 4L (MT-ND4L) of Microcebus simmonsi (Simmons's mouse lemur).